A 382-amino-acid polypeptide reads, in one-letter code: 2-carboxy-1,4-naphthoquinone phytyltransferase, chloroplastic (382 aa).

A chloroplast-targeting transit peptide spans 1–66 (MVNFVSLCDI…RRNLRVRPIF (66 aa)). A run of 8 helical transmembrane segments spans residues 99 to 119 (VALVPLTVGASAAYLETGLFL), 123 to 143 (YVTLLLSSILIITWLNLSNDV), 168 to 188 (TLAAAITSLALGVSGLVWTSL), 196 to 216 (ILLLASAILCGYVYQCPPFRL), 224 to 244 (PLCFAAFGPFATTAFYLLLGS), 257 to 277 (VLSSSVLVGFTTSLILFCSHF), 323 to 343 (ILPLPCTLMCFLTLPVGNLVS), and 361 to 381 (YYCVRLHALLGAALSLGLVIA).

This sequence belongs to the MenA family. Type 2 subfamily.

The protein resides in the plastid. It is found in the chloroplast membrane. The catalysed reaction is 2-carboxy-1,4-naphthoquinone + phytyl diphosphate + H(+) = demethylphylloquinone + CO2 + diphosphate. Involved in the synthesis of phylloquinone (vitamin K1). Catalyzes the transfer of a prenyl chain to 2-carboxy-1,4-naphthoquinone. This chain is 2-carboxy-1,4-naphthoquinone phytyltransferase, chloroplastic (ABC4), found in Arabidopsis thaliana (Mouse-ear cress).